Here is a 564-residue protein sequence, read N- to C-terminus: Dihydropyrimidinase-related protein 5 (564 aa).

Thr509 and Thr514 each carry phosphothreonine. A phosphoserine mark is found at Ser532 and Ser538. Arg559 carries the post-translational modification Omega-N-methylarginine.

Belongs to the metallo-dependent hydrolases superfamily. Hydantoinase/dihydropyrimidinase family. In terms of assembly, homotetramer, and heterotetramer with other DPYS-like proteins. Interacts with DPYSL2, DPYSL3 and DPYSL4. Interacts with MAP2 and TUBB3.

The protein localises to the cytoplasm. Involved in the negative regulation of dendrite outgrowth. This Homo sapiens (Human) protein is Dihydropyrimidinase-related protein 5 (DPYSL5).